The following is a 136-amino-acid chain: Preprocaerulein type I' (136 aa).

Positions 1 to 26 are cleaved as a signal peptide; it reads MFKGILLCVLFAVLSANPLSQPEGFA. Positions 27 to 136 are excised as a propeptide; sequence DEERDVRGLA…NALGGAPQQR (110 aa). A disordered region spans residues 82 to 101; sequence GAPQQREANDERRFADDEDD.

It belongs to the gastrin/cholecystokinin family. In terms of tissue distribution, expressed by the skin glands.

The protein localises to the secreted. In terms of biological role, the pharmacological activities of caerulein are quite similar to the physiological activities of gastrin and related peptides. In Xenopus laevis (African clawed frog), this protein is Preprocaerulein type I'.